Consider the following 383-residue polypeptide: Meiotically up-regulated gene 93 protein (383 aa).

One copy of the TPR repeat lies at 75-108; it reads KKVIWRRGLAYLRLGHPHLANRDWEHSLELDPNN.

Its subcellular location is the cytoplasm. The protein localises to the nucleus. Functionally, has a role in meiosis. This chain is Meiotically up-regulated gene 93 protein (mug93), found in Schizosaccharomyces pombe (strain 972 / ATCC 24843) (Fission yeast).